The following is a 417-amino-acid chain: Queuine tRNA-ribosyltransferase accessory subunit 2 (417 aa).

Cys324, Cys326, Cys329, and His355 together coordinate Zn(2+).

This sequence belongs to the queuine tRNA-ribosyltransferase family. QTRT2 subfamily. As to quaternary structure, heterodimer of a catalytic subunit and an accessory subunit. It depends on Zn(2+) as a cofactor.

It localises to the cytoplasm. Functionally, non-catalytic subunit of the queuine tRNA-ribosyltransferase (TGT) that catalyzes the base-exchange of a guanine (G) residue with queuine (Q) at position 34 (anticodon wobble position) in tRNAs with GU(N) anticodons (tRNA-Asp, -Asn, -His and -Tyr), resulting in the hypermodified nucleoside queuosine (7-(((4,5-cis-dihydroxy-2-cyclopenten-1-yl)amino)methyl)-7-deazaguanosine). The sequence is that of Queuine tRNA-ribosyltransferase accessory subunit 2 from Drosophila persimilis (Fruit fly).